Consider the following 366-residue polypeptide: Ferredoxin--NADP reductase, leaf isozyme 2, chloroplastic (366 aa).

Residues 1–48 (MAAVNTVSSLPCSKAGAAVAGGAPRPSTCSVFYPPRCWSKRSSGNGVR) constitute a chloroplast transit peptide. In terms of domain architecture, FAD-binding FR-type spans 87 to 209 (KEPYTGRCLL…TGPVGKEMLM (123 aa)). FAD contacts are provided by residues 145-148 (RLYS), 166-168 (CVK), tyrosine 172, and 183-185 (VCS). The NADP(+) site is built by serine 148 and lysine 168. A disulfide bridge links cysteine 184 with cysteine 189. At serine 185 the chain carries Phosphoserine. Threonine 216 is subject to Phosphothreonine. Threonine 224 serves as a coordination point for FAD. Residues threonine 224, 256-257 (VP), 286-287 (SR), lysine 296, 325-326 (GL), and glutamate 364 contribute to the NADP(+) site.

Belongs to the ferredoxin--NADP reductase type 1 family. As to quaternary structure, heterodimer with LFNR1. Component of high molecular weight thylakoid LFNRs-containing protein complexes containing LIR1, LFNR1, LFNR2, TIC62 and TROL proteins. Interacts directly with LFNR1 and LFNR2; LIR1 increases the affinity of LFNR1 and LFNR2 for TIC62 and subsequent thylakoid relocalization. It depends on FAD as a cofactor. In terms of processing, may form interchain disulfide bonds with LIR1.

The protein localises to the plastid. The protein resides in the chloroplast stroma. It is found in the chloroplast thylakoid membrane. It catalyses the reaction 2 reduced [2Fe-2S]-[ferredoxin] + NADP(+) + H(+) = 2 oxidized [2Fe-2S]-[ferredoxin] + NADPH. The protein operates within energy metabolism; photosynthesis. Functionally, plays a key role in regulating the relative amounts of cyclic and non-cyclic electron flow to meet the demands of the plant for ATP and reducing power. The chain is Ferredoxin--NADP reductase, leaf isozyme 2, chloroplastic from Oryza sativa subsp. indica (Rice).